The following is a 212-amino-acid chain: Thymidylate kinase (212 aa).

Residue 10 to 17 coordinates ATP; the sequence is GPDGAGKT.

It belongs to the thymidylate kinase family.

It carries out the reaction dTMP + ATP = dTDP + ADP. Functionally, phosphorylation of dTMP to form dTDP in both de novo and salvage pathways of dTTP synthesis. In Lactobacillus delbrueckii subsp. bulgaricus (strain ATCC 11842 / DSM 20081 / BCRC 10696 / JCM 1002 / NBRC 13953 / NCIMB 11778 / NCTC 12712 / WDCM 00102 / Lb 14), this protein is Thymidylate kinase.